The primary structure comprises 378 residues: Deoxyguanosinetriphosphate triphosphohydrolase-like protein (378 aa).

The tract at residues 1 to 28 is disordered; it reads MLAPYACQPGESRGRQQPESMSTFRSPF. The segment covering 15–26 has biased composition (polar residues); it reads RQQPESMSTFRS. One can recognise an HD domain in the interval 62–198; that stretch reads RLTHSIEVAQ…AAIADDVAYS (137 aa).

Belongs to the dGTPase family. Type 2 subfamily.

This chain is Deoxyguanosinetriphosphate triphosphohydrolase-like protein, found in Cereibacter sphaeroides (strain ATCC 17025 / ATH 2.4.3) (Rhodobacter sphaeroides).